The primary structure comprises 310 residues: Putative HTH-type transcriptional regulatory protein M1425_1284 (310 aa).

Positions L125–V180 constitute an HTH cro/C1-type domain. Residues I136–K155 constitute a DNA-binding region (H-T-H motif).

The sequence is that of Putative HTH-type transcriptional regulatory protein M1425_1284 from Saccharolobus islandicus (strain M.14.25 / Kamchatka #1) (Sulfolobus islandicus).